We begin with the raw amino-acid sequence, 223 residues long: uncharacterized protein (223 aa).

The next 5 helical transmembrane spans lie at 28–48 (LSNT…GLIT), 59–79 (LIVQ…ITLA), 88–108 (AFNQ…MFFI), 128–148 (IVGL…VWLS), and 176–196 (AWAI…YMIV).

Its subcellular location is the cell membrane. This is an uncharacterized protein from Mycoplasma pneumoniae (strain ATCC 29342 / M129 / Subtype 1) (Mycoplasmoides pneumoniae).